Reading from the N-terminus, the 471-residue chain is MTTEAAVLDYKVADISLAEWGRKEIEIAEKEMPGLMATRKKYEGKKPLAGARIAGSLHMTIQTAVLIETLVELGADVRWASCNIFSTQDHAAAAIAAAGVPVFAWKGETLDEYWWCTRQILEFEGGLGPNLIVDDGGDATLMIHFGYKIENDPSMLDKTPGNAEEKALLQQLKAVFAEDNQRWHKVAAGMKGVSEETTTGVHRLYQMMEKGELLFPAINVNDSVTKSKFDNLYGCRESLADGIKRATDVMIAGKVVVVLGYGDVGKGCAHSMRSYGARVIVTEIDPICALQAAMEGFEVTTMEEAVKEGNIFVTATGNKDVITLDHIKQMRDEAIVCNIGHFDNEIQVDALNNFKGATRINIKPQVDKYVFENGNCIYLLAEGRLVNLGCATGHPSFVMSNSFTNQTLAQIELWQNDYKVGVYRLPKKLDEEVARLHLGQIGAKLTTLTKEQADYIGVPVEGPYKPEHYRY.

Substrate-binding residues include threonine 60, aspartate 135, and glutamate 196. 197–199 serves as a coordination point for NAD(+); that stretch reads TTT. Lysine 226 and aspartate 230 together coordinate substrate. NAD(+) contacts are provided by residues asparagine 231, 260–265, glutamate 283, asparagine 318, 339–341, and asparagine 387; these read GYGDVG and IGH.

It belongs to the adenosylhomocysteinase family. NAD(+) serves as cofactor.

It localises to the cytoplasm. The enzyme catalyses S-adenosyl-L-homocysteine + H2O = L-homocysteine + adenosine. It functions in the pathway amino-acid biosynthesis; L-homocysteine biosynthesis; L-homocysteine from S-adenosyl-L-homocysteine: step 1/1. Functionally, may play a key role in the regulation of the intracellular concentration of adenosylhomocysteine. This Chlorobaculum tepidum (strain ATCC 49652 / DSM 12025 / NBRC 103806 / TLS) (Chlorobium tepidum) protein is Adenosylhomocysteinase.